The following is a 172-amino-acid chain: Large ribosomal subunit protein uL10 (172 aa).

The protein belongs to the universal ribosomal protein uL10 family. As to quaternary structure, part of the ribosomal stalk of the 50S ribosomal subunit. The N-terminus interacts with L11 and the large rRNA to form the base of the stalk. The C-terminus forms an elongated spine to which L12 dimers bind in a sequential fashion forming a multimeric L10(L12)X complex.

In terms of biological role, forms part of the ribosomal stalk, playing a central role in the interaction of the ribosome with GTP-bound translation factors. The polypeptide is Large ribosomal subunit protein uL10 (Chlorobium phaeobacteroides (strain DSM 266 / SMG 266 / 2430)).